Reading from the N-terminus, the 342-residue chain is Putative glycosyltransferases (342 aa).

Helical transmembrane passes span 227–247 and 262–282; these read IFYL…YLII and VIVS…LVGI.

It belongs to the glycosyltransferase 2 family.

The protein resides in the cell membrane. In terms of biological role, may play only a redundant role in maintaining cell wall viability and bacterial virulence. The chain is Putative glycosyltransferases (pimF) from Mycobacterium tuberculosis (strain CDC 1551 / Oshkosh).